Consider the following 427-residue polypeptide: MSRSEDLYARAQHRIPGGVNSPVRAFNGVGGTPIFFQRGEGAYVYDEDKKRYIDYVGSWGPMILGHSHPDVLDAVRQQLDFGLSFGAPTEVEITMAEKVCELVPSMDMVRMVNSGTEATMSAIRLARGYTGRDKIVKFEGCYHGHSDSLLVKAGSGALTLGVPNSPGVPADLAQHTITLQYNDIEEVKRCFSEIGDQIACIIVEPVAGNMNCILPVEGFLETLRKVCDESGAVLIFDEVMTGFRVALGGAQAHFGIVPDLTTLGKVIGAGMPVGAFGGKREIMEHISPLGPVYQAGTLSGNPVAMVAGLAVLNKISEEGFHQTLGTKADRLVSGLKQAADEAGVPFCVVSVGGMFGFFFTEAEVVATFADVQKCDLSKFKAFFHYMLEEGVYFAPAAFEAGFISQAHTEEDIDYTIEAAKRSFAKLV.

N6-(pyridoxal phosphate)lysine is present on Lys265.

This sequence belongs to the class-III pyridoxal-phosphate-dependent aminotransferase family. HemL subfamily. As to quaternary structure, homodimer. It depends on pyridoxal 5'-phosphate as a cofactor.

It is found in the cytoplasm. It carries out the reaction (S)-4-amino-5-oxopentanoate = 5-aminolevulinate. The protein operates within porphyrin-containing compound metabolism; protoporphyrin-IX biosynthesis; 5-aminolevulinate from L-glutamyl-tRNA(Glu): step 2/2. The sequence is that of Glutamate-1-semialdehyde 2,1-aminomutase from Marinomonas sp. (strain MWYL1).